Here is a 317-residue protein sequence, read N- to C-terminus: MRSYKLIAPAKINLYLEIIGDRPDGYHELVMILQSIDLADEIEIHSLSSETIRVHCNHPQVPTDKSNLVYRAAELMATKFPEAFAKYGGVDITVHKHIPVAAGLAGGSTNAAAVLVGIDLLWNLGLTQTELEELGSILGSDVPFCVAGGTVIATGRGEQLSPLPNLDHIYIVLGKYRSLEVSTAWAYKTYRQEYGSTYLRDTNDLASRAAAVHSGSIVKAIVEKDAVAIAQKLHNDLEKVVLPSYPQVLQLRELFASQPSVIGTMMSGSGPSVFALCENQAQAEQVQQQVRQTIPDEDLELFVTRTITHGIQVLGNE.

Residue Lys-11 is part of the active site. Pro-99–Thr-109 serves as a coordination point for ATP. The active site involves Asp-141.

Belongs to the GHMP kinase family. IspE subfamily.

The enzyme catalyses 4-CDP-2-C-methyl-D-erythritol + ATP = 4-CDP-2-C-methyl-D-erythritol 2-phosphate + ADP + H(+). The protein operates within isoprenoid biosynthesis; isopentenyl diphosphate biosynthesis via DXP pathway; isopentenyl diphosphate from 1-deoxy-D-xylulose 5-phosphate: step 3/6. Functionally, catalyzes the phosphorylation of the position 2 hydroxy group of 4-diphosphocytidyl-2C-methyl-D-erythritol. In Trichormus variabilis (strain ATCC 29413 / PCC 7937) (Anabaena variabilis), this protein is 4-diphosphocytidyl-2-C-methyl-D-erythritol kinase.